A 405-amino-acid polypeptide reads, in one-letter code: Argininosuccinate synthase (405 aa).

ATP contacts are provided by residues 11–19 (AYSGGLDTS) and Ala38. L-citrulline-binding residues include Tyr91 and Ser96. Gly121 provides a ligand contact to ATP. Residues Thr123, Asn127, and Asp128 each contribute to the L-aspartate site. Residue Asn127 coordinates L-citrulline. The L-citrulline site is built by Arg131, Ser182, Ser191, Glu267, and Tyr279.

Belongs to the argininosuccinate synthase family. Type 1 subfamily. As to quaternary structure, homotetramer.

It is found in the cytoplasm. It carries out the reaction L-citrulline + L-aspartate + ATP = 2-(N(omega)-L-arginino)succinate + AMP + diphosphate + H(+). It participates in amino-acid biosynthesis; L-arginine biosynthesis; L-arginine from L-ornithine and carbamoyl phosphate: step 2/3. The polypeptide is Argininosuccinate synthase (Sphingopyxis alaskensis (strain DSM 13593 / LMG 18877 / RB2256) (Sphingomonas alaskensis)).